A 347-amino-acid chain; its full sequence is NADH-ubiquinone oxidoreductase chain 2 (347 aa).

Helical transmembrane passes span 3–23 (PPIF…VMTS), 25–45 (HWML…PILM), 59–79 (YFLT…INLL), 96–116 (ILMT…FWVP), 122–142 (IPLS…LSVL), 149–169 (INPN…GWGG), 178–198 (ILAY…LYNP), 201–221 (MILN…LFML), 237–257 (MPLI…LPPL), 274–294 (EMII…YFYM), and 325–345 (FLPP…MISI).

The protein belongs to the complex I subunit 2 family. In terms of assembly, core subunit of respiratory chain NADH dehydrogenase (Complex I) which is composed of 45 different subunits. Interacts with TMEM242.

The protein resides in the mitochondrion inner membrane. The catalysed reaction is a ubiquinone + NADH + 5 H(+)(in) = a ubiquinol + NAD(+) + 4 H(+)(out). In terms of biological role, core subunit of the mitochondrial membrane respiratory chain NADH dehydrogenase (Complex I) which catalyzes electron transfer from NADH through the respiratory chain, using ubiquinone as an electron acceptor. Essential for the catalytic activity and assembly of complex I. The polypeptide is NADH-ubiquinone oxidoreductase chain 2 (Genetta servalina (Servaline genet)).